A 476-amino-acid chain; its full sequence is Riboflavin transporter rft-2 (476 aa).

The helical transmembrane segment at 1 to 21 (MGCSAATFILVALFGSSSWMG) threads the bilayer. The Cytoplasmic segment spans residues 22 to 41 (TNSVWMQLPLLTSELPEQWN). A helical transmembrane segment spans residues 42–62 (LPSYLAGVVQIACIVPLIYTI). Residues 63 to 75 (LHKGVKSFTIPTA) lie on the Extracellular side of the membrane. A helical membrane pass occupies residues 76-96 (PLIIALLSLACCCQLGLSFFW). Over 97 to 113 (SDYSEIFGAPRSWPLYS) the chain is Cytoplasmic. Residues 114 to 134 (LLFGLAIVNAMSNVLFMPFMA) traverse the membrane as a helical segment. Over 135 to 140 (QFHPAY) the chain is Extracellular. The chain crosses the membrane as a helical span at residues 141–161 (LNAYFVGMGLSSLAPSLLSLA). The Cytoplasmic portion of the chain corresponds to 162–185 (QGTSMFKCDEKGVAERFPPNFSVS). The chain crosses the membrane as a helical span at residues 186–206 (IFFFVIFSFTCVALFAFIALY). The Extracellular segment spans residues 207–306 (RSGAHTHFAT…HPVDYITGVK (100 aa)). Positions 215–249 (ATPNKKEPNEGTPLKKDLNNTSSSRKGDDEDESPI) are disordered. Residues 218 to 232 (NKKEPNEGTPLKKDL) show a composition bias toward basic and acidic residues. Asparagine 233 carries an N-linked (GlcNAc...) asparagine glycan. A helical membrane pass occupies residues 307-327 (FTFLLFTTALVNAQMNGIITS). At 328–342 (VQSYAALPYSQATYH) the chain is on the cytoplasmic side. Residues 343–363 (FAVTLSNVVSPLSSFLPFFIS) traverse the membrane as a helical segment. Topologically, residues 364 to 366 (VRS) are extracellular. A helical transmembrane segment spans residues 367–387 (IPVLAILTACSTAMTAFIVYL). The Cytoplasmic segment spans residues 388 to 393 (AALSPN). Residues 394–414 (LIFNSVTIGSALSIGGSLIAA) traverse the membrane as a helical segment. The Extracellular portion of the chain corresponds to 415-437 (GLHSYLRVVFASLLREGHQSESR). The helical transmembrane segment at 438 to 458 (LFWCGVFIQIGSFIGSAVMFP) threads the bilayer. The Cytoplasmic portion of the chain corresponds to 459–476 (LVNIAHLFTSAPQCKSIS).

Belongs to the riboflavin transporter family. Expressed in intestine and pharynx.

The protein localises to the cell membrane. The catalysed reaction is riboflavin(in) = riboflavin(out). Functionally, riboflavin transporter. This chain is Riboflavin transporter rft-2, found in Caenorhabditis elegans.